Consider the following 892-residue polypeptide: Inner centromere protein B (892 aa).

Disordered regions lie at residues 50–124 (AEPE…KRMT), 160–182 (EHER…EMKT), 255–286 (LVNE…SLVV), 305–470 (KRES…PPPH), 502–555 (KRNT…RRED), 569–687 (QLEE…RERE), 702–760 (ERAA…AAAA), and 797–819 (NYGM…KPIP). Residues 60-69 (SQKRRRKKRT) are compositionally biased toward basic residues. Over residues 90 to 99 (SANWSSSVRR) the composition is skewed to low complexity. Residues 259–272 (QPLNLSNESATPTG) show a composition bias toward polar residues. The span at 305–315 (KRESMTREAVR) shows a compositional bias: basic and acidic residues. The segment covering 316-326 (KSIRQSISKKK) has biased composition (basic residues). A compositionally biased stretch (low complexity) spans 332–343 (SSTSSQRSCHSS). The span at 431–444 (RAVDELSDDERPSE) shows a compositional bias: basic and acidic residues. The segment covering 455–470 (PSPPCPPSKIVKPPPH) has biased composition (pro residues). Basic and acidic residues-rich tracts occupy residues 509 to 555 (PDPK…RRED), 569 to 602 (QLEE…EEKA), 609 to 687 (KKQE…RERE), and 702 to 754 (ERAA…KAKE). The SAH stretch occupies residues 512–725 (KSEEKERQRL…EERKKREQQQ (214 aa)). The IN box stretch occupies residues 802-876 (LNSDDSTDDE…RTSSAVWHSP (75 aa)). Residues Ser-869 and Ser-870 each carry the phosphoserine modification.

The protein belongs to the INCENP family. As to quaternary structure, component of the CPC at least composed of survivin/birc5, incenp, cdca8/borealin and/or cdca9/dasra-A, and aurkb/aurora-B. Interacts (via C-terminus) with aurkb (via N-terminus and kinase domain). Interacts (via N-terminus) with birc5.1, birc5.2, cdca8 and cdca9. Interacts with mtus1.

It is found in the nucleus. The protein localises to the chromosome. Its subcellular location is the centromere. The protein resides in the cytoplasm. It localises to the cytoskeleton. It is found in the spindle. The protein localises to the midbody. Its subcellular location is the kinetochore. Its function is as follows. Component of the chromosomal passenger complex (CPC), a complex that acts as a key regulator of mitosis. The CPC complex has essential functions at the centromere in ensuring correct chromosome alignment and segregation and is required for chromatin-induced microtubule stabilization and spindle assembly. Acts as a scaffold regulating CPC localization and activity. The C-terminus associates with aurkb/aurora-B, the N-terminus associated with cdca8/borealin and/or cdca9/dasra-A tethers the CPC to the inner centromere, and the microtubule binding activity within the central SAH domain directs aurkb/aurora-B toward substrates near microtubules. Activates aurkb. This is Inner centromere protein B (incenp-b) from Xenopus laevis (African clawed frog).